A 233-amino-acid polypeptide reads, in one-letter code: Cytidylate kinase (233 aa).

ATP is bound at residue Gly-15–Ser-23.

The protein belongs to the cytidylate kinase family. Type 1 subfamily.

Its subcellular location is the cytoplasm. It catalyses the reaction CMP + ATP = CDP + ADP. It carries out the reaction dCMP + ATP = dCDP + ADP. The protein is Cytidylate kinase of Citrifermentans bemidjiense (strain ATCC BAA-1014 / DSM 16622 / JCM 12645 / Bem) (Geobacter bemidjiensis).